The following is a 203-amino-acid chain: Holliday junction branch migration complex subunit RuvA (203 aa).

Residues 1-63 are domain I; the sequence is MIVSLRGTVE…EESQTLYGFT (63 aa). Residues 64–142 form a domain II region; sequence DDASRRMFVL…GFNDGIPAAA (79 aa). Residues 143 to 150 form a flexible linker region; that stretch reads QPQLSIAV. The tract at residues 150-203 is domain III; sequence VDQAVQEQVLEALVGLGFSEKIALPVLSRVLRDSPELSKSQALRAALSELGTKN.

The protein belongs to the RuvA family. Homotetramer. Forms an RuvA(8)-RuvB(12)-Holliday junction (HJ) complex. HJ DNA is sandwiched between 2 RuvA tetramers; dsDNA enters through RuvA and exits via RuvB. An RuvB hexamer assembles on each DNA strand where it exits the tetramer. Each RuvB hexamer is contacted by two RuvA subunits (via domain III) on 2 adjacent RuvB subunits; this complex drives branch migration. In the full resolvosome a probable DNA-RuvA(4)-RuvB(12)-RuvC(2) complex forms which resolves the HJ.

It is found in the cytoplasm. In terms of biological role, the RuvA-RuvB-RuvC complex processes Holliday junction (HJ) DNA during genetic recombination and DNA repair, while the RuvA-RuvB complex plays an important role in the rescue of blocked DNA replication forks via replication fork reversal (RFR). RuvA specifically binds to HJ cruciform DNA, conferring on it an open structure. The RuvB hexamer acts as an ATP-dependent pump, pulling dsDNA into and through the RuvAB complex. HJ branch migration allows RuvC to scan DNA until it finds its consensus sequence, where it cleaves and resolves the cruciform DNA. The sequence is that of Holliday junction branch migration complex subunit RuvA from Corynebacterium diphtheriae (strain ATCC 700971 / NCTC 13129 / Biotype gravis).